Consider the following 238-residue polypeptide: Ribonuclease PH (238 aa).

Phosphate is bound by residues Arg86 and 124–126 (GTR).

It belongs to the RNase PH family. Homohexameric ring arranged as a trimer of dimers.

It catalyses the reaction tRNA(n+1) + phosphate = tRNA(n) + a ribonucleoside 5'-diphosphate. Functionally, phosphorolytic 3'-5' exoribonuclease that plays an important role in tRNA 3'-end maturation. Removes nucleotide residues following the 3'-CCA terminus of tRNAs; can also add nucleotides to the ends of RNA molecules by using nucleoside diphosphates as substrates, but this may not be physiologically important. Probably plays a role in initiation of 16S rRNA degradation (leading to ribosome degradation) during starvation. In Salmonella gallinarum (strain 287/91 / NCTC 13346), this protein is Ribonuclease PH.